Reading from the N-terminus, the 224-residue chain is MDKQQLAKMIDHTILKPEADKASIEKLCKEALEYNFASVCINPTNVELAAKLLKGSEVKVCTVIGFPLGANTMEVKAFETKDAIAKGADEVDMVINIGRLKDKDYEYVEKDIKAVVDAADKKALTKVIIETCLLTEEEKVKACELAKKAGADFVKTSTGFSTGGATPEDIKLMRETVGPEMGVKASGGVRSIEDAEAVIKNGATRIGASASIAICEGKVSDSTY.

D92 acts as the Proton donor/acceptor in catalysis. The active-site Schiff-base intermediate with acetaldehyde is the K155. K184 serves as the catalytic Proton donor/acceptor.

It belongs to the DeoC/FbaB aldolase family. DeoC type 1 subfamily.

The protein resides in the cytoplasm. It catalyses the reaction 2-deoxy-D-ribose 5-phosphate = D-glyceraldehyde 3-phosphate + acetaldehyde. It participates in carbohydrate degradation; 2-deoxy-D-ribose 1-phosphate degradation; D-glyceraldehyde 3-phosphate and acetaldehyde from 2-deoxy-alpha-D-ribose 1-phosphate: step 2/2. In terms of biological role, catalyzes a reversible aldol reaction between acetaldehyde and D-glyceraldehyde 3-phosphate to generate 2-deoxy-D-ribose 5-phosphate. This Clostridium perfringens (strain 13 / Type A) protein is Deoxyribose-phosphate aldolase.